Here is a 358-residue protein sequence, read N- to C-terminus: MNQTHTFCDTLISTSNPLKQLGWKPFFQQQLTLDDYDNTIFARVIAHHRSGYLLATEAGQVHLNVHHSLPNMTVGDWVILNEDQQFVRLLDRLSLFSRKAAGSKVAEQLIAANVDTVFIVCSLNHDFNLSRIERYLALVHEADVEPVIVLSKADLCDDVDELKSQVQKLDPLLVIETVNGLDAESTSKLMSWCNEGQTVAFIGSSGVGKSTLVNALLGQQEQSTGHIREDDSKGRHTTTSRSIHLLPAGGILIDTPGMREIQLVDCEAGVSEAFADVEALADHCRFGDCKHQTEPGCAVQAAIENGSLEVRRFNNYQKLLREQAFNGATLAEQRAQSRQFGKLTRNVMSDKRKRQQSY.

Residues 106 to 261 (AEQLIAANVD…LIDTPGMREI (156 aa)) form the CP-type G domain. Residues 151 to 154 (SKAD) and 203 to 211 (GSSGVGKST) contribute to the GTP site. Zn(2+)-binding residues include Cys-284, Cys-289, His-291, and Cys-297.

Belongs to the TRAFAC class YlqF/YawG GTPase family. RsgA subfamily. As to quaternary structure, monomer. Associates with 30S ribosomal subunit, binds 16S rRNA. Zn(2+) serves as cofactor.

Its subcellular location is the cytoplasm. Its function is as follows. One of several proteins that assist in the late maturation steps of the functional core of the 30S ribosomal subunit. Helps release RbfA from mature subunits. May play a role in the assembly of ribosomal proteins into the subunit. Circularly permuted GTPase that catalyzes slow GTP hydrolysis, GTPase activity is stimulated by the 30S ribosomal subunit. This Vibrio parahaemolyticus serotype O3:K6 (strain RIMD 2210633) protein is Small ribosomal subunit biogenesis GTPase RsgA 2.